The sequence spans 345 residues: uncharacterized protein (345 aa).

Belongs to the methyltransferase superfamily.

This is an uncharacterized protein from Streptomyces fradiae (Streptomyces roseoflavus).